We begin with the raw amino-acid sequence, 284 residues long: Bifunctional protein FolD 2 (284 aa).

Residues 165-167 (GRG), Thr192, and Val233 each bind NADP(+).

This sequence belongs to the tetrahydrofolate dehydrogenase/cyclohydrolase family. Homodimer.

It catalyses the reaction (6R)-5,10-methylene-5,6,7,8-tetrahydrofolate + NADP(+) = (6R)-5,10-methenyltetrahydrofolate + NADPH. The catalysed reaction is (6R)-5,10-methenyltetrahydrofolate + H2O = (6R)-10-formyltetrahydrofolate + H(+). Its pathway is one-carbon metabolism; tetrahydrofolate interconversion. Its function is as follows. Catalyzes the oxidation of 5,10-methylenetetrahydrofolate to 5,10-methenyltetrahydrofolate and then the hydrolysis of 5,10-methenyltetrahydrofolate to 10-formyltetrahydrofolate. In Streptomyces avermitilis (strain ATCC 31267 / DSM 46492 / JCM 5070 / NBRC 14893 / NCIMB 12804 / NRRL 8165 / MA-4680), this protein is Bifunctional protein FolD 2.